Reading from the N-terminus, the 200-residue chain is Protein GrpE (200 aa).

This sequence belongs to the GrpE family. In terms of assembly, homodimer.

The protein resides in the cytoplasm. Functionally, participates actively in the response to hyperosmotic and heat shock by preventing the aggregation of stress-denatured proteins, in association with DnaK and GrpE. It is the nucleotide exchange factor for DnaK and may function as a thermosensor. Unfolded proteins bind initially to DnaJ; upon interaction with the DnaJ-bound protein, DnaK hydrolyzes its bound ATP, resulting in the formation of a stable complex. GrpE releases ADP from DnaK; ATP binding to DnaK triggers the release of the substrate protein, thus completing the reaction cycle. Several rounds of ATP-dependent interactions between DnaJ, DnaK and GrpE are required for fully efficient folding. The protein is Protein GrpE of Geobacter sulfurreducens (strain ATCC 51573 / DSM 12127 / PCA).